A 345-amino-acid polypeptide reads, in one-letter code: Phosphoribosylformylglycinamidine cyclo-ligase (345 aa).

It belongs to the AIR synthase family.

The protein localises to the cytoplasm. The enzyme catalyses 2-formamido-N(1)-(5-O-phospho-beta-D-ribosyl)acetamidine + ATP = 5-amino-1-(5-phospho-beta-D-ribosyl)imidazole + ADP + phosphate + H(+). It functions in the pathway purine metabolism; IMP biosynthesis via de novo pathway; 5-amino-1-(5-phospho-D-ribosyl)imidazole from N(2)-formyl-N(1)-(5-phospho-D-ribosyl)glycinamide: step 2/2. The sequence is that of Phosphoribosylformylglycinamidine cyclo-ligase from Histophilus somni (strain 2336) (Haemophilus somnus).